The chain runs to 143 residues: Transcriptional regulatory protein RosR (143 aa).

Residues 79-97 (CLECGGNFKSLKRHLMTHH) form a C2H3-type zinc finger.

This sequence belongs to the ros/MucR family.

The sequence is that of Transcriptional regulatory protein RosR (rosR) from Rhizobium etli (strain ATCC 51251 / DSM 11541 / JCM 21823 / NBRC 15573 / CFN 42).